The chain runs to 335 residues: Glyceraldehyde-3-phosphate dehydrogenase (335 aa).

NAD(+)-binding positions include 12–13, aspartate 34, and lysine 79; that span reads RI. D-glyceraldehyde 3-phosphate is bound by residues 150–152, threonine 181, 210–211, and arginine 233; these read SCT and TG. Cysteine 151 serves as the catalytic Nucleophile. Asparagine 315 contacts NAD(+).

It belongs to the glyceraldehyde-3-phosphate dehydrogenase family. As to quaternary structure, homotetramer.

It is found in the cytoplasm. It carries out the reaction D-glyceraldehyde 3-phosphate + phosphate + NAD(+) = (2R)-3-phospho-glyceroyl phosphate + NADH + H(+). The protein operates within carbohydrate degradation; glycolysis; pyruvate from D-glyceraldehyde 3-phosphate: step 1/5. The polypeptide is Glyceraldehyde-3-phosphate dehydrogenase (GPD) (Debaryomyces hansenii (strain ATCC 36239 / CBS 767 / BCRC 21394 / JCM 1990 / NBRC 0083 / IGC 2968) (Yeast)).